The chain runs to 47 residues: Ruminococcin-A (47 aa).

An N-terminal signal peptide occupies residues M1–G23. T30 and T39 each carry 2,3-didehydrobutyrine. The beta-methyllanthionine (Thr-Cys) cross-link spans T30–C35. Positions S32–C46 form a cross-link, lanthionine (Ser-Cys). Residues T45–C47 constitute a cross-link (beta-methyllanthionine (Thr-Cys)).

It belongs to the type A lantibiotic family. In terms of processing, maturation of lantibiotics involves the enzymatic conversion of Thr, and Ser into dehydrated AA and the formation of thioether bonds with cysteine. This is followed by membrane translocation and cleavage of the modified precursor.

It localises to the secreted. Its function is as follows. Lanthionine-containing peptide antibiotic (lantibiotic) active on Gram-positive bacteria. The bactericidal activity of lantibiotics is based on depolarization of energized bacterial cytoplasmic membranes, initiated by the formation of aqueous transmembrane pores. Ruminococcin A is a broad spectrum bacteriocin exhibiting activity against a wide range of pathogenic clostridia and B.longum. This is Ruminococcin-A (rumA1) from Blautia hansenii (Ruminococcus hansenii).